The sequence spans 344 residues: Trace amine-associated receptor 8b (344 aa).

Residues 1–33 (MTSNFSQATLQLCYENVNASCIKTPYSPGLRVL) lie on the Extracellular side of the membrane. N-linked (GlcNAc...) asparagine glycans are attached at residues asparagine 4 and asparagine 18. 2 disulfides stabilise this stretch: cysteine 21-cysteine 185 and cysteine 104-cysteine 189. A helical membrane pass occupies residues 34–54 (LYMVFGFGAVLAVCGNLLVVI). Over 55–67 (SVLHFKQLHSPAN) the chain is Cytoplasmic. The helical transmembrane segment at 68-88 (FLIASLASADFLVGISVMPFS) threads the bilayer. The Extracellular segment spans residues 89 to 102 (MVRSIESCWYFGDT). A helical membrane pass occupies residues 103–127 (FCSLHSCCDAAFCYSSLFHLCFISV). The Cytoplasmic segment spans residues 128–146 (DRYIAVTEPLVYPTKFTMS). A helical transmembrane segment spans residues 147 to 167 (VSGICISISWILPLVYSSAVF). At 168-196 (YTGISATGIENLVSALNCVGGCQVAINQD) the chain is on the extracellular side. A helical transmembrane segment spans residues 197 to 217 (WVLISFLLFFIPTLVMIILYS). Residues 218–256 (KIFLVAKQQAVKIETSISGSKGESSLESHKARVAKRERK) are Cytoplasmic-facing. A helical transmembrane segment spans residues 257 to 277 (AAKTLGVTVMAFMVSWLPYTI). Residues 278-295 (DTLIDAFMGFITPAYVYE) are Extracellular-facing. Residues 296 to 319 (ICGWIAYYNSAMNPLIYAFFYPWF) traverse the membrane as a helical segment. At 320 to 344 (RKAIKLILSGKILKGHSSTTSLFSE) the chain is on the cytoplasmic side.

Belongs to the G-protein coupled receptor 1 family.

The protein localises to the cell membrane. Functionally, olfactory receptor activated by trace amines. Trace amine compounds are enriched in animal body fluids and act on trace amine-associated receptors (TAARs) to elicit both intraspecific and interspecific innate behaviors. Ligand-binding causes a conformation change that triggers signaling via G(s)-class of G alpha proteins (GNAL or GNAS). This chain is Trace amine-associated receptor 8b, found in Rattus norvegicus (Rat).